The chain runs to 405 residues: Transposase from transposon Tn1545 (405 aa).

Positions 79–163 (GKKMTLCQLY…SLKASFYIAI (85 aa)) constitute a Core-binding (CB) domain. The Tyr recombinase domain maps to 186–392 (VPKTVLTEEQ…TFDSAMAEMK (207 aa)). Catalysis depends on residues R225, K264, H343, R346, and H369. Y379 serves as the catalytic O-(3'-phospho-DNA)-tyrosine intermediate.

This sequence belongs to the 'phage' integrase family.

The sequence is that of Transposase from transposon Tn1545 (int) from Streptococcus agalactiae serotype V (strain ATCC BAA-611 / 2603 V/R).